The sequence spans 318 residues: MSTQIAPARISDPAAFGRVAVLLGGTSSEREVSLNSGSNVLDALRARGVDAQPVDGIPALAQALVAQRFDRVFNVLHGHNGGGEDGIVQGLMEAFGVPYTGSNVLGSALSMDKIRTKQVWLSLGLSTPRYARLAAGASAQQIHAAAEQIGLPVIVKPANEGSSVGVSRVFDQAQLDEAVTLAARYDGALLMEQLIEGDELTVAVLGDVALPSIRIVPKGQWYDYNAKYIAEDTQYLCPGLDGDAEAQIGQLALDAFRAAGCSGWGRVDVMRDGSTGQLYLLEVNTAPGMTSHSLVPKAARQLGIDFEALVWRVLEQTL.

Residues 117–315 (KQVWLSLGLS…FEALVWRVLE (199 aa)) enclose the ATP-grasp domain. 146–201 (AEQIGLPVIVKPANEGSSVGVSRVFDQAQLDEAVTLAARYDGALLMEQLIEGDELT) serves as a coordination point for ATP. Mg(2+) is bound by residues aspartate 268, glutamate 282, and asparagine 284.

This sequence belongs to the D-alanine--D-alanine ligase family. Requires Mg(2+) as cofactor. Mn(2+) serves as cofactor.

It is found in the cytoplasm. The catalysed reaction is 2 D-alanine + ATP = D-alanyl-D-alanine + ADP + phosphate + H(+). Its pathway is cell wall biogenesis; peptidoglycan biosynthesis. Functionally, cell wall formation. This Xanthomonas campestris pv. campestris (strain ATCC 33913 / DSM 3586 / NCPPB 528 / LMG 568 / P 25) protein is D-alanine--D-alanine ligase B.